A 404-amino-acid polypeptide reads, in one-letter code: Cysteine desulfurase IscS (404 aa).

Pyridoxal 5'-phosphate contacts are provided by residues 75-76, Asn-155, Gln-183, and 203-205; these read AT and SGH. Position 206 is an N6-(pyridoxal phosphate)lysine (Lys-206). A pyridoxal 5'-phosphate-binding site is contributed by Thr-243. Cys-328 serves as the catalytic Cysteine persulfide intermediate. Residue Cys-328 participates in [2Fe-2S] cluster binding.

Belongs to the class-V pyridoxal-phosphate-dependent aminotransferase family. NifS/IscS subfamily. Homodimer. Forms a heterotetramer with IscU, interacts with other sulfur acceptors. The cofactor is pyridoxal 5'-phosphate.

It is found in the cytoplasm. It catalyses the reaction (sulfur carrier)-H + L-cysteine = (sulfur carrier)-SH + L-alanine. Its pathway is cofactor biosynthesis; iron-sulfur cluster biosynthesis. In terms of biological role, master enzyme that delivers sulfur to a number of partners involved in Fe-S cluster assembly, tRNA modification or cofactor biosynthesis. Catalyzes the removal of elemental sulfur atoms from cysteine to produce alanine. Functions as a sulfur delivery protein for Fe-S cluster synthesis onto IscU, an Fe-S scaffold assembly protein, as well as other S acceptor proteins. In Shewanella baltica (strain OS185), this protein is Cysteine desulfurase IscS.